The primary structure comprises 175 residues: MNCPYCSHPDTKVIDSRDVDDGVRRRRECVVCGQRFTTYERFQPAGLFVVKKDQRREEFNKEKLLSGLRRACEKRPLPAGAVDKIAGDIEAELYNMGKAEIPSTLLGDMVMEKLKALDNIAYVRFASVYREFTDITQLKKVVDNLVSGQDEGIHKGQLSLLPEDRVSPKTRYQRR.

A zinc finger spans residues C3–C32. One can recognise an ATP-cone domain in the interval L47 to Q137.

The protein belongs to the NrdR family. It depends on Zn(2+) as a cofactor.

Functionally, negatively regulates transcription of bacterial ribonucleotide reductase nrd genes and operons by binding to NrdR-boxes. This Dehalococcoides mccartyi (strain ATCC BAA-2266 / KCTC 15142 / 195) (Dehalococcoides ethenogenes (strain 195)) protein is Transcriptional repressor NrdR.